Reading from the N-terminus, the 556-residue chain is 2-succinyl-5-enolpyruvyl-6-hydroxy-3-cyclohexene-1-carboxylate synthase (556 aa).

This sequence belongs to the TPP enzyme family. MenD subfamily. As to quaternary structure, homodimer. Mg(2+) serves as cofactor. The cofactor is Mn(2+). Requires thiamine diphosphate as cofactor.

The enzyme catalyses isochorismate + 2-oxoglutarate + H(+) = 5-enolpyruvoyl-6-hydroxy-2-succinyl-cyclohex-3-ene-1-carboxylate + CO2. Its pathway is quinol/quinone metabolism; 1,4-dihydroxy-2-naphthoate biosynthesis; 1,4-dihydroxy-2-naphthoate from chorismate: step 2/7. It participates in quinol/quinone metabolism; menaquinone biosynthesis. Its function is as follows. Catalyzes the thiamine diphosphate-dependent decarboxylation of 2-oxoglutarate and the subsequent addition of the resulting succinic semialdehyde-thiamine pyrophosphate anion to isochorismate to yield 2-succinyl-5-enolpyruvyl-6-hydroxy-3-cyclohexene-1-carboxylate (SEPHCHC). This chain is 2-succinyl-5-enolpyruvyl-6-hydroxy-3-cyclohexene-1-carboxylate synthase, found in Staphylococcus haemolyticus (strain JCSC1435).